A 118-amino-acid polypeptide reads, in one-letter code: Small ribosomal subunit protein uS13 (118 aa).

Positions 95–118 are disordered; sequence LPVRGQRTRTNARTRKGPKKLINK.

This sequence belongs to the universal ribosomal protein uS13 family. Part of the 30S ribosomal subunit. Forms a loose heterodimer with protein S19. Forms two bridges to the 50S subunit in the 70S ribosome.

In terms of biological role, located at the top of the head of the 30S subunit, it contacts several helices of the 16S rRNA. In the 70S ribosome it contacts the 23S rRNA (bridge B1a) and protein L5 of the 50S subunit (bridge B1b), connecting the 2 subunits; these bridges are implicated in subunit movement. Contacts the tRNAs in the A and P-sites. This is Small ribosomal subunit protein uS13 from Blochmanniella floridana.